We begin with the raw amino-acid sequence, 288 residues long: MNDVSVEYQAIEEKDVLLASKADDCHPIFRRAPSSVEFNKLRKRLLRHMRQALDDFSMLSTGKKWLVALSGGKDSYGLLALLLDLKWRGLLPVEILACNLDQGQPGFPKHILPDFLSSYKIPYRIEYQDTYSIVTDKLAQTQTYCSLCSRLRRGNLYRIAREEGCSALILGHHRDDVLETFFMNLFHGGRLAAMPGKLKNDEGDLFVLRPLVYAAEEDMEKFSQAMQFPIIPCNLCGSQDGLQRNAMKEMLKNIERQMPGRKDTMIRALANVRPSHLLDKKFFDFKTY.

The short motif at 70–75 (SGGKDS) is the PP-loop motif element. Residues Cys-145, Cys-148, and Cys-236 each coordinate [4Fe-4S] cluster.

The protein belongs to the TtcA family. As to quaternary structure, homodimer. It depends on Mg(2+) as a cofactor. The cofactor is [4Fe-4S] cluster.

Its subcellular location is the cytoplasm. The enzyme catalyses cytidine(32) in tRNA + S-sulfanyl-L-cysteinyl-[cysteine desulfurase] + AH2 + ATP = 2-thiocytidine(32) in tRNA + L-cysteinyl-[cysteine desulfurase] + A + AMP + diphosphate + H(+). It participates in tRNA modification. Functionally, catalyzes the ATP-dependent 2-thiolation of cytidine in position 32 of tRNA, to form 2-thiocytidine (s(2)C32). The sulfur atoms are provided by the cysteine/cysteine desulfurase (IscS) system. The sequence is that of tRNA-cytidine(32) 2-sulfurtransferase from Bartonella tribocorum (strain CIP 105476 / IBS 506).